Here is a 109-residue protein sequence, read N- to C-terminus: Protein reprimo (109 aa).

N-linked (GlcNAc...) asparagine glycans are attached at residues N7 and N18. The helical transmembrane segment at 56–76 threads the bilayer; sequence VVQIAVMCVLSLTVVFGIFFL. S98 is modified (phosphoserine).

Belongs to the reprimo family.

Its subcellular location is the cytoplasm. It is found in the membrane. Its function is as follows. May be involved in the regulation of p53-dependent G2 arrest of the cell cycle. Seems to induce cell cycle arrest by inhibiting CDK1 activity and nuclear translocation of the CDC2 cyclin B1 complex. The polypeptide is Protein reprimo (Rprm) (Rattus norvegicus (Rat)).